The following is a 204-amino-acid chain: N-(5'-phosphoribosyl)anthranilate isomerase (204 aa).

It belongs to the TrpF family.

It catalyses the reaction N-(5-phospho-beta-D-ribosyl)anthranilate = 1-(2-carboxyphenylamino)-1-deoxy-D-ribulose 5-phosphate. It functions in the pathway amino-acid biosynthesis; L-tryptophan biosynthesis; L-tryptophan from chorismate: step 3/5. The chain is N-(5'-phosphoribosyl)anthranilate isomerase from Bacillus cereus (strain G9842).